Reading from the N-terminus, the 158-residue chain is Transcription elongation factor GreA (158 aa).

Residues 14 to 76 (VKKLEEELEY…QIENMLKNAN (63 aa)) are a coiled coil.

The protein belongs to the GreA/GreB family.

Necessary for efficient RNA polymerase transcription elongation past template-encoded arresting sites. The arresting sites in DNA have the property of trapping a certain fraction of elongating RNA polymerases that pass through, resulting in locked ternary complexes. Cleavage of the nascent transcript by cleavage factors such as GreA or GreB allows the resumption of elongation from the new 3'terminus. GreA releases sequences of 2 to 3 nucleotides. The chain is Transcription elongation factor GreA from Clostridium acetobutylicum (strain ATCC 824 / DSM 792 / JCM 1419 / IAM 19013 / LMG 5710 / NBRC 13948 / NRRL B-527 / VKM B-1787 / 2291 / W).